Reading from the N-terminus, the 699-residue chain is Dymeclin (699 aa).

Glycine 2 carries the N-myristoyl glycine lipid modification. Serine 346 carries the phosphoserine modification.

The protein belongs to the dymeclin family.

The polypeptide is Dymeclin (Drosophila melanogaster (Fruit fly)).